Consider the following 155-residue polypeptide: Small ribosomal subunit protein uS7 (155 aa).

Belongs to the universal ribosomal protein uS7 family. Part of the 30S ribosomal subunit. Contacts proteins S9 and S11.

Functionally, one of the primary rRNA binding proteins, it binds directly to 16S rRNA where it nucleates assembly of the head domain of the 30S subunit. Is located at the subunit interface close to the decoding center, probably blocks exit of the E-site tRNA. This chain is Small ribosomal subunit protein uS7, found in Xylella fastidiosa (strain M23).